The following is a 385-amino-acid chain: Flap endonuclease 1 (385 aa).

The N-domain stretch occupies residues M1 to R104. Mg(2+) is bound at residue D34. DNA is bound by residues R47 and R70. Residues D86, E158, E160, D179, and D181 each coordinate Mg(2+). The I-domain stretch occupies residues G122–Y253. E158 lines the DNA pocket. Residues G231 and D233 each contribute to the DNA site. Residue D233 participates in Mg(2+) binding. The interval T336–F344 is interaction with PCNA. A disordered region spans residues T346 to K385. Basic residues predominate over residues A368–K385.

Belongs to the XPG/RAD2 endonuclease family. FEN1 subfamily. Interacts with PCNA. Three molecules of FEN1 bind to one PCNA trimer with each molecule binding to one PCNA monomer. PCNA stimulates the nuclease activity without altering cleavage specificity. Mg(2+) serves as cofactor. Phosphorylated. Phosphorylation upon DNA damage induces relocalization to the nuclear plasma.

It is found in the nucleus. The protein resides in the nucleolus. The protein localises to the nucleoplasm. It localises to the mitochondrion. Its function is as follows. Structure-specific nuclease with 5'-flap endonuclease and 5'-3' exonuclease activities involved in DNA replication and repair. During DNA replication, cleaves the 5'-overhanging flap structure that is generated by displacement synthesis when DNA polymerase encounters the 5'-end of a downstream Okazaki fragment. It enters the flap from the 5'-end and then tracks to cleave the flap base, leaving a nick for ligation. Also involved in the long patch base excision repair (LP-BER) pathway, by cleaving within the apurinic/apyrimidinic (AP) site-terminated flap. Acts as a genome stabilization factor that prevents flaps from equilibrating into structures that lead to duplications and deletions. Also possesses 5'-3' exonuclease activity on nicked or gapped double-stranded DNA, and exhibits RNase H activity. Also involved in replication and repair of rDNA and in repairing mitochondrial DNA. In Drosophila melanogaster (Fruit fly), this protein is Flap endonuclease 1.